We begin with the raw amino-acid sequence, 312 residues long: uncharacterized protein (312 aa).

This sequence belongs to the mimivirus R69 family.

This is an uncharacterized protein from Acanthamoeba polyphaga mimivirus (APMV).